The following is a 321-amino-acid chain: Aspartate carbamoyltransferase catalytic subunit (321 aa).

Carbamoyl phosphate contacts are provided by R60 and T61. L-aspartate is bound at residue K88. Residues R110, H138, and Q141 each coordinate carbamoyl phosphate. R171 and R225 together coordinate L-aspartate. Positions 266 and 267 each coordinate carbamoyl phosphate.

The protein belongs to the aspartate/ornithine carbamoyltransferase superfamily. ATCase family. As to quaternary structure, heterododecamer (2C3:3R2) of six catalytic PyrB chains organized as two trimers (C3), and six regulatory PyrI chains organized as three dimers (R2).

It carries out the reaction carbamoyl phosphate + L-aspartate = N-carbamoyl-L-aspartate + phosphate + H(+). Its pathway is pyrimidine metabolism; UMP biosynthesis via de novo pathway; (S)-dihydroorotate from bicarbonate: step 2/3. In terms of biological role, catalyzes the condensation of carbamoyl phosphate and aspartate to form carbamoyl aspartate and inorganic phosphate, the committed step in the de novo pyrimidine nucleotide biosynthesis pathway. This is Aspartate carbamoyltransferase catalytic subunit from Sorangium cellulosum (strain So ce56) (Polyangium cellulosum (strain So ce56)).